A 416-amino-acid chain; its full sequence is Tryptophan synthase beta chain (416 aa).

Residue Lys109 is modified to N6-(pyridoxal phosphate)lysine.

It belongs to the TrpB family. Tetramer of two alpha and two beta chains. Pyridoxal 5'-phosphate serves as cofactor.

It carries out the reaction (1S,2R)-1-C-(indol-3-yl)glycerol 3-phosphate + L-serine = D-glyceraldehyde 3-phosphate + L-tryptophan + H2O. Its pathway is amino-acid biosynthesis; L-tryptophan biosynthesis; L-tryptophan from chorismate: step 5/5. In terms of biological role, the beta subunit is responsible for the synthesis of L-tryptophan from indole and L-serine. This Synechococcus sp. (strain WH7803) protein is Tryptophan synthase beta chain.